The primary structure comprises 692 residues: Alpha-amylase SusG (692 aa).

The first 22 residues, 1 to 22, serve as a signal peptide directing secretion; it reads MNKHLHFLSLLWLSMLMAFMTA. Cysteine 23 carries N-palmitoyl cysteine lipidation. A lipid anchor (S-diacylglycerol cysteine) is attached at cysteine 23. Mg(2+) is bound by residues aspartate 73, aspartate 75, aspartate 77, tyrosine 79, and aspartate 81. Ca(2+) is bound at residue asparagine 153. Starch binding regions lie at residues histidine 154, 260–263, and 330–333; these read YYGE and NIMF. Residue aspartate 352 participates in Ca(2+) binding. The segment at 386-392 is starch binding; the sequence is RLDAVKH. The active-site Nucleophile is the aspartate 388. Histidine 392 lines the Ca(2+) pocket. Glutamate 431 (proton donor) is an active-site residue. Regions of interest (starch binding) are located at aspartate 437 and arginine 457.

It belongs to the glycosyl hydrolase 13 family. As to quaternary structure, monomer. Ca(2+) is required as a cofactor.

Its subcellular location is the cell outer membrane. The enzyme catalyses Endohydrolysis of (1-&gt;4)-alpha-D-glucosidic linkages in polysaccharides containing three or more (1-&gt;4)-alpha-linked D-glucose units.. Its pathway is glycan degradation; starch degradation. Its function is as follows. Alpha-amylase that cleaves starch into oligosaccharides before internalization for degradation, the first step in starch degradation. The chain is Alpha-amylase SusG (susG) from Bacteroides thetaiotaomicron (strain ATCC 29148 / DSM 2079 / JCM 5827 / CCUG 10774 / NCTC 10582 / VPI-5482 / E50).